Here is a 532-residue protein sequence, read N- to C-terminus: Methionine--tRNA ligase (532 aa).

Residues 16-26 carry the 'HIGH' region motif; the sequence is YYVNDVPHLGS. The Zn(2+) site is built by Cys131, Cys134, Cys149, and His152. The 'KMSKS' region signature appears at 305–309; that stretch reads KMGKS. Residue Lys308 participates in ATP binding.

Belongs to the class-I aminoacyl-tRNA synthetase family. MetG type 2A subfamily. As to quaternary structure, monomer. Zn(2+) serves as cofactor.

It is found in the cytoplasm. It carries out the reaction tRNA(Met) + L-methionine + ATP = L-methionyl-tRNA(Met) + AMP + diphosphate. Its function is as follows. Is required not only for elongation of protein synthesis but also for the initiation of all mRNA translation through initiator tRNA(fMet) aminoacylation. In Synechocystis sp. (strain ATCC 27184 / PCC 6803 / Kazusa), this protein is Methionine--tRNA ligase (metG).